The following is a 1382-amino-acid chain: Hepatocyte growth factor receptor (1382 aa).

The signal sequence occupies residues 1–24 (MKAPAVLAPGVLVLLFTLVRKSHG). The Extracellular portion of the chain corresponds to 25–935 (ECEEALAKSK…VQPDQNFTGL (911 aa)). A Sema domain is found at 27–516 (EEALAKSKMN…TGKKITKIPL (490 aa)). N-linked (GlcNAc...) asparagine glycosylation occurs at asparagine 45. Disulfide bonds link cysteine 95–cysteine 101, cysteine 98–cysteine 160, cysteine 133–cysteine 141, and cysteine 173–cysteine 176. A glycan (N-linked (GlcNAc...) asparagine) is linked at asparagine 106. 2 N-linked (GlcNAc...) asparagine glycosylation sites follow: asparagine 203 and asparagine 359. 2 cysteine pairs are disulfide-bonded: cysteine 299–cysteine 364 and cysteine 386–cysteine 398. Asparagine 400, asparagine 406, and asparagine 450 each carry an N-linked (GlcNAc...) asparagine glycan. 4 disulfides stabilise this stretch: cysteine 521–cysteine 539, cysteine 527–cysteine 562, cysteine 530–cysteine 546, and cysteine 542–cysteine 552. 3 consecutive IPT/TIG domains span residues 564-656 (PTIY…FSYV), 658-740 (PVIT…FSYQ), and 743-837 (PTVY…LIYV). An O-linked (Man) threonine glycan is attached at threonine 583. Residues asparagine 608 and asparagine 636 are each glycosylated (N-linked (GlcNAc...) asparagine). The O-linked (Man) threonine glycan is linked to threonine 677. An N-linked (GlcNAc...) asparagine glycan is attached at asparagine 751. Threonine 762 carries O-linked (Man) threonine glycosylation. N-linked (GlcNAc...) asparagine glycosylation is found at asparagine 786, asparagine 880, and asparagine 931. The helical transmembrane segment at 936–956 (IVGVVSISIILLLLLGLFLWL) threads the bilayer. Over 957 to 1382 (KKRKQIKDLG…QDSVDDEVDT (426 aa)) the chain is Cytoplasmic. Serine 967 bears the Phosphoserine mark. Threonine 978 is subject to Phosphothreonine. A phosphoserine mark is found at serine 991, serine 998, and serine 1001. Tyrosine 1004 bears the Phosphotyrosine mark. The Protein kinase domain maps to 1079–1346 (VHFNEVIGRG…RISAIFSTFI (268 aa)). ATP-binding positions include 1085-1093 (IGRGHFGCV) and lysine 1111. Aspartate 1205 serves as the catalytic Proton acceptor. Residues 1213 to 1382 (LDEKFTVKVA…QDSVDDEVDT (170 aa)) are interaction with RANBP9. Residue tyrosine 1231 is modified to Phosphotyrosine. Phosphotyrosine; by autocatalysis is present on residues tyrosine 1235 and tyrosine 1236. The residue at position 1290 (threonine 1290) is a Phosphothreonine. The interaction with MUC20 stretch occupies residues 1321–1360 (WHPKAEMRPSFSELVSRISAIFSTFIGEHYVHVNTTYVNV). Phosphotyrosine; by autocatalysis is present on residues tyrosine 1350 and tyrosine 1357. Tyrosine 1366 is modified (phosphotyrosine).

It belongs to the protein kinase superfamily. Tyr protein kinase family. Heterodimer made of an alpha chain (50 kDa) and a beta chain (145 kDa) which are disulfide linked. Binds PLXNB1. Interacts when phosphorylated with downstream effectors including STAT3, PIK3R1, SRC, PCLG1, GRB2 and GAB1. Interacts with SPSB1, SPSB2 and SPSB4. Interacts with INPP5D/SHIP1. When phosphorylated at Tyr-1357, interacts with INPPL1/SHIP2. Interacts with RANBP9 and RANBP10, as well as SPSB1, SPSB2, SPSB3 and SPSB4. SPSB1 binding occurs in the presence and in the absence of HGF, however HGF treatment has a positive effect on this interaction. Interacts with MUC20; prevents interaction with GRB2 and suppresses hepatocyte growth factor-induced cell proliferation. Interacts with GRB10. Interacts with PTPN1 and PTPN2. Interacts with HSP90AA1 and HSP90AB1; the interaction suppresses MET kinase activity. Interacts with tensin TNS3. Interacts (when phosphorylated) with tensin TNS4 (via SH2 domain); the interaction increases MET protein stability by inhibiting MET endocytosis and subsequent lysosomal degradation. Autophosphorylated in response to ligand binding on Tyr-1235 and Tyr-1236 in the kinase domain leading to further phosphorylation of Tyr-1350 and Tyr-1357 in the C-terminal multifunctional docking site. Dephosphorylated by PTPRJ at Tyr-1350 and Tyr-1366. Dephosphorylated by PTPN1 and PTPN2. In terms of processing, ubiquitinated. Ubiquitination by CBL regulates the receptor stability and activity through proteasomal degradation. Post-translationally, O-mannosylation of IPT/TIG domains by TMEM260 is required for protein maturation. O-mannosylated residues are composed of single mannose glycans that are not elongated or modified.

The protein resides in the membrane. It catalyses the reaction L-tyrosyl-[protein] + ATP = O-phospho-L-tyrosyl-[protein] + ADP + H(+). Its activity is regulated as follows. In its inactive state, the C-terminal tail interacts with the catalytic domain and inhibits the kinase activity. Upon ligand binding, the C-terminal tail is displaced and becomes phosphorylated, thus increasing the kinase activity. Receptor tyrosine kinase that transduces signals from the extracellular matrix into the cytoplasm by binding to hepatocyte growth factor/HGF ligand. Regulates many physiological processes including proliferation, scattering, morphogenesis and survival. Ligand binding at the cell surface induces autophosphorylation of MET on its intracellular domain that provides docking sites for downstream signaling molecules. Following activation by ligand, interacts with the PI3-kinase subunit PIK3R1, PLCG1, SRC, GRB2, STAT3 or the adapter GAB1. Recruitment of these downstream effectors by MET leads to the activation of several signaling cascades including the RAS-ERK, PI3 kinase-AKT, or PLCgamma-PKC. The RAS-ERK activation is associated with the morphogenetic effects while PI3K/AKT coordinates prosurvival effects. During embryonic development, MET signaling plays a role in gastrulation, development and migration of muscles and neuronal precursors, angiogenesis and kidney formation. In adults, participates in wound healing as well as organ regeneration and tissue remodeling. Also promotes differentiation and proliferation of hematopoietic cells. The polypeptide is Hepatocyte growth factor receptor (MET) (Loxodonta africana (African elephant)).